Here is a 390-residue protein sequence, read N- to C-terminus: Acetate kinase (390 aa).

Asn10 lines the Mg(2+) pocket. ATP is bound at residue Lys17. Arg89 contacts substrate. Asp146 (proton donor/acceptor) is an active-site residue. Residues 204 to 208 (HLGNG), 278 to 280 (DMR), and 323 to 327 (GIGEN) contribute to the ATP site. A Mg(2+)-binding site is contributed by Glu376.

The protein belongs to the acetokinase family. In terms of assembly, homodimer. The cofactor is Mg(2+). Mn(2+) serves as cofactor.

It is found in the cytoplasm. It catalyses the reaction acetate + ATP = acetyl phosphate + ADP. Its pathway is metabolic intermediate biosynthesis; acetyl-CoA biosynthesis; acetyl-CoA from acetate: step 1/2. Its function is as follows. Catalyzes the formation of acetyl phosphate from acetate and ATP. Can also catalyze the reverse reaction. The protein is Acetate kinase of Mycoplasma pneumoniae (strain ATCC 29342 / M129 / Subtype 1) (Mycoplasmoides pneumoniae).